The sequence spans 196 residues: Small ribosomal subunit protein uS4c (196 aa).

Positions 16 to 36 are disordered; it reads GTLPGLTSKRPKSGSDLKTQL. The 62-residue stretch at 89–150 folds into the S4 RNA-binding domain; that stretch reads MRLDNILFRL…KQRSKALIQN (62 aa).

The protein belongs to the universal ribosomal protein uS4 family. As to quaternary structure, part of the 30S ribosomal subunit. Contacts protein S5. The interaction surface between S4 and S5 is involved in control of translational fidelity.

The protein localises to the plastid. Its subcellular location is the chloroplast. Functionally, one of the primary rRNA binding proteins, it binds directly to 16S rRNA where it nucleates assembly of the body of the 30S subunit. With S5 and S12 plays an important role in translational accuracy. The sequence is that of Small ribosomal subunit protein uS4c (rps4) from Rhapis humilis (Slender lady palm).